The chain runs to 110 residues: Large ribosomal subunit protein uL22 (110 aa).

It belongs to the universal ribosomal protein uL22 family. Part of the 50S ribosomal subunit.

This protein binds specifically to 23S rRNA; its binding is stimulated by other ribosomal proteins, e.g. L4, L17, and L20. It is important during the early stages of 50S assembly. It makes multiple contacts with different domains of the 23S rRNA in the assembled 50S subunit and ribosome. In terms of biological role, the globular domain of the protein is located near the polypeptide exit tunnel on the outside of the subunit, while an extended beta-hairpin is found that lines the wall of the exit tunnel in the center of the 70S ribosome. The protein is Large ribosomal subunit protein uL22 of Campylobacter fetus subsp. fetus (strain 82-40).